Consider the following 178-residue polypeptide: Large ribosomal subunit protein bL25 (178 aa).

The protein belongs to the bacterial ribosomal protein bL25 family. CTC subfamily. As to quaternary structure, part of the 50S ribosomal subunit; part of the 5S rRNA/L5/L18/L25 subcomplex. Contacts the 5S rRNA. Binds to the 5S rRNA independently of L5 and L18.

Functionally, this is one of the proteins that binds to the 5S RNA in the ribosome where it forms part of the central protuberance. This chain is Large ribosomal subunit protein bL25, found in Helicobacter acinonychis (strain Sheeba).